The sequence spans 62 residues: Conotoxin Lt5.8 (62 aa).

The N-terminal stretch at 1 to 19 (MLCLPVFIILLLLVSPAAT) is a signal peptide. Positions 20–47 (MPVDLEILKAPTKESRKDFEMRIELLRS) are excised as a propeptide. Position 50 is a pyrrolidone carboxylic acid (Q50). At Q61 the chain carries Glutamine amide.

This sequence belongs to the conotoxin T superfamily. Post-translationally, contains 2 disulfide bonds that can be either 'C1-C3, C2-C4' or 'C1-C4, C2-C3', since these disulfide connectivities have been observed for conotoxins with cysteine framework V (for examples, see AC P0DQQ7 and AC P81755). In terms of tissue distribution, expressed by the venom duct.

It is found in the secreted. In Conus litteratus (Lettered cone), this protein is Conotoxin Lt5.8.